Here is a 131-residue protein sequence, read N- to C-terminus: Large ribosomal subunit protein bL19 (131 aa).

This sequence belongs to the bacterial ribosomal protein bL19 family.

This protein is located at the 30S-50S ribosomal subunit interface and may play a role in the structure and function of the aminoacyl-tRNA binding site. In Caulobacter sp. (strain K31), this protein is Large ribosomal subunit protein bL19.